We begin with the raw amino-acid sequence, 563 residues long: Arginine--tRNA ligase (563 aa).

The short motif at 121–131 is the 'HIGH' region element; that stretch reads PNIAKPFSIGH.

This sequence belongs to the class-I aminoacyl-tRNA synthetase family. As to quaternary structure, monomer.

The protein localises to the cytoplasm. The enzyme catalyses tRNA(Arg) + L-arginine + ATP = L-arginyl-tRNA(Arg) + AMP + diphosphate. This Streptococcus pneumoniae (strain Hungary19A-6) protein is Arginine--tRNA ligase.